Reading from the N-terminus, the 706-residue chain is Semenogelin-2 (706 aa).

An N-terminal signal peptide occupies residues 1–23 (MKSIILFVLSLLLILEKQAAVMG). Disordered regions lie at residues 25 to 62 (KGGS…SKGS), 131 to 156 (KGGQ…KGIF), and 276 to 678 (NLNQ…SGAH). Basic and acidic residues predominate over residues 50–59 (GQKDKQHTES). Residues 137 to 151 (HGTQNPSQDQGNSPS) are compositionally biased toward polar residues. A compositionally biased stretch (basic and acidic residues) spans 297–308 (TEERQPNHEENS). The span at 329–339 (KSQNQVTIPSQ) shows a compositional bias: polar residues. Residues 340 to 349 (DQEHGHKENK) show a composition bias toward basic and acidic residues. A compositionally biased stretch (polar residues) spans 389 to 399 (KSQNQVTIPSQ). Residues 400–409 (DQEHGHKENK) are compositionally biased toward basic and acidic residues. The segment covering 449–459 (KSQNQVTIPSQ) has biased composition (polar residues). Positions 460 to 469 (DQEHGHKENK) are enriched in basic and acidic residues. Residues 509 to 519 (KSQNQVAIPSQ) are compositionally biased toward polar residues. Over residues 520-529 (DQEHGHKENK) the composition is skewed to basic and acidic residues. Positions 569–579 (KSQNQVTIPSQ) are enriched in polar residues. Residues 580–589 (DQEHGHKENK) show a composition bias toward basic and acidic residues. 2 stretches are compositionally biased toward polar residues: residues 611 to 622 (KDVSQSSLSFQT) and 630 to 653 (SQIQ…NSGK). Residues 654-670 (SADREQDLLSHEQEGRY) are compositionally biased toward basic and acidic residues.

Belongs to the semenogelin family. In terms of assembly, interacts with SERPINA5.

Its subcellular location is the secreted. Participates in the formation of a gel matrix (sperm coagulum) entrapping the accessory gland secretions and ejaculated spermatozoa. This chain is Semenogelin-2 (SEMG2), found in Macaca mulatta (Rhesus macaque).